The chain runs to 288 residues: Transposase InsF for insertion sequence IS3A (288 aa).

The Integrase catalytic domain maps to 124-287; the sequence is YASGPNQKWA…SPEQFENKNL (164 aa).

Belongs to the transposase IS3/IS150/IS904 family.

Involved in the transposition of the insertion sequence IS3. In Escherichia coli (strain K12), this protein is Transposase InsF for insertion sequence IS3A (insF1).